The primary structure comprises 235 residues: Urease accessory protein UreF (235 aa).

This sequence belongs to the UreF family. UreD, UreF and UreG form a complex that acts as a GTP-hydrolysis-dependent molecular chaperone, activating the urease apoprotein by helping to assemble the nickel containing metallocenter of UreC. The UreE protein probably delivers the nickel.

It is found in the cytoplasm. In terms of biological role, required for maturation of urease via the functional incorporation of the urease nickel metallocenter. This Haemophilus influenzae (strain PittEE) protein is Urease accessory protein UreF.